Here is a 527-residue protein sequence, read N- to C-terminus: Peptide chain release factor 3 (527 aa).

Positions 9–277 (AKRRTFAIIS…AVVDWAPRPL (269 aa)) constitute a tr-type G domain. Residues 18–25 (SHPDAGKT), 86–90 (DTPGH), and 140–143 (NKLD) contribute to the GTP site.

The protein belongs to the TRAFAC class translation factor GTPase superfamily. Classic translation factor GTPase family. PrfC subfamily.

The protein localises to the cytoplasm. Functionally, increases the formation of ribosomal termination complexes and stimulates activities of RF-1 and RF-2. It binds guanine nucleotides and has strong preference for UGA stop codons. It may interact directly with the ribosome. The stimulation of RF-1 and RF-2 is significantly reduced by GTP and GDP, but not by GMP. This is Peptide chain release factor 3 from Pseudomonas putida (strain W619).